Reading from the N-terminus, the 360-residue chain is Phospho-N-acetylmuramoyl-pentapeptide-transferase (360 aa).

The next 10 helical transmembrane spans lie at 18-38, 73-93, 97-117, 135-155, 168-188, 199-219, 236-256, 263-283, 288-308, and 339-359; these read VFSYLTLRAILGILTALMMSL, TMGGLLILAAIFTSTLLWADL, YVWATLFVIGSLGVVGFVDDY, FWQSVIALVVACALFFTSTQA, VLPQLGLFYIVITYFALVGTS, GLAIVPTILVAAALAIIAYLT, ASELVVVCTAIVGAGLGFLWF, VFMGDVGSLALGGALGIIAVL, LLLIIMGGVFVMEALSVILQV, and IVRFWIISIVLVLAGLATLKI.

It belongs to the glycosyltransferase 4 family. MraY subfamily. Mg(2+) serves as cofactor.

It is found in the cell inner membrane. It catalyses the reaction UDP-N-acetyl-alpha-D-muramoyl-L-alanyl-gamma-D-glutamyl-meso-2,6-diaminopimeloyl-D-alanyl-D-alanine + di-trans,octa-cis-undecaprenyl phosphate = di-trans,octa-cis-undecaprenyl diphospho-N-acetyl-alpha-D-muramoyl-L-alanyl-D-glutamyl-meso-2,6-diaminopimeloyl-D-alanyl-D-alanine + UMP. The protein operates within cell wall biogenesis; peptidoglycan biosynthesis. Functionally, catalyzes the initial step of the lipid cycle reactions in the biosynthesis of the cell wall peptidoglycan: transfers peptidoglycan precursor phospho-MurNAc-pentapeptide from UDP-MurNAc-pentapeptide onto the lipid carrier undecaprenyl phosphate, yielding undecaprenyl-pyrophosphoryl-MurNAc-pentapeptide, known as lipid I. In Pseudoalteromonas translucida (strain TAC 125), this protein is Phospho-N-acetylmuramoyl-pentapeptide-transferase.